A 31-amino-acid chain; its full sequence is GFLSTVKNLATNVAGTVIDTLKCKVTGGCRS.

C23 and C29 are disulfide-bonded.

Expressed by the skin glands.

It localises to the secreted. Functionally, antimicrobial activity against Gram-negative bacterium E.coli. The protein is Palustrin-2c of Lithobates palustris (Pickerel frog).